Reading from the N-terminus, the 190-residue chain is Segregation and condensation protein B (190 aa).

This sequence belongs to the ScpB family. As to quaternary structure, homodimer. Homodimerization may be required to stabilize the binding of ScpA to the Smc head domains. Component of a cohesin-like complex composed of ScpA, ScpB and the Smc homodimer, in which ScpA and ScpB bind to the head domain of Smc. The presence of the three proteins is required for the association of the complex with DNA.

It is found in the cytoplasm. In terms of biological role, participates in chromosomal partition during cell division. May act via the formation of a condensin-like complex containing Smc and ScpA that pull DNA away from mid-cell into both cell halves. The protein is Segregation and condensation protein B of Bacillus cereus (strain G9842).